Reading from the N-terminus, the 391-residue chain is MPGNSFGKLFRVTTFGESHGPAVGVVIDGVPAGLPLTVEDIKFELEFRRPGRLYVSGRREKDEPEILSGIFNNRTTGSPIAVIVRNTDVISSFYEEIRYKPRPGHADLPFIMKYGYENWDYRGGGRASARETVGRVIAGAVAKKLLMLADTWIAGHLRSLGPEELNEEVTFEEVLCSKYSPVRASKKVLEEKYEALIKKATQEGDSYGGIAEVITKNPPIGLGEPVFDKMKAELAKAIMSIPAVTGFEYGLGFMVSKMKGSEANDEIIRKDNKIGWKYNYAGGILGGLTNGEDLIVRCAFKPTSSIRKPQKTIDLRNLEETYISVIGRHDPAVAIRGVTVVESMVALTLVDHAMRAGVIPLVKLTEEQGNIVQQRWERYVRSCKPMEESQL.

Residue Arg-48 coordinates NADP(+). FMN contacts are provided by residues 126 to 128 (RAS), Gly-286, 301 to 305 (KPTSS), and Arg-328.

Belongs to the chorismate synthase family. Requires FMNH2 as cofactor.

It carries out the reaction 5-O-(1-carboxyvinyl)-3-phosphoshikimate = chorismate + phosphate. The protein operates within metabolic intermediate biosynthesis; chorismate biosynthesis; chorismate from D-erythrose 4-phosphate and phosphoenolpyruvate: step 7/7. Its function is as follows. Catalyzes the anti-1,4-elimination of the C-3 phosphate and the C-6 proR hydrogen from 5-enolpyruvylshikimate-3-phosphate (EPSP) to yield chorismate, which is the branch point compound that serves as the starting substrate for the three terminal pathways of aromatic amino acid biosynthesis. This reaction introduces a second double bond into the aromatic ring system. The sequence is that of Chorismate synthase from Saccharolobus islandicus (strain L.S.2.15 / Lassen #1) (Sulfolobus islandicus).